The sequence spans 192 residues: Xanthine phosphoribosyltransferase (192 aa).

Residues leucine 20 and asparagine 27 each coordinate xanthine. 128 to 132 (ANGDA) is a 5-phospho-alpha-D-ribose 1-diphosphate binding site. Residue lysine 156 coordinates xanthine.

Belongs to the purine/pyrimidine phosphoribosyltransferase family. Xpt subfamily. In terms of assembly, homodimer.

The protein resides in the cytoplasm. It carries out the reaction XMP + diphosphate = xanthine + 5-phospho-alpha-D-ribose 1-diphosphate. It functions in the pathway purine metabolism; XMP biosynthesis via salvage pathway; XMP from xanthine: step 1/1. Functionally, converts the preformed base xanthine, a product of nucleic acid breakdown, to xanthosine 5'-monophosphate (XMP), so it can be reused for RNA or DNA synthesis. The protein is Xanthine phosphoribosyltransferase of Staphylococcus aureus (strain Mu3 / ATCC 700698).